A 118-amino-acid polypeptide reads, in one-letter code: Large ribosomal subunit protein uL22c (118 aa).

This sequence belongs to the universal ribosomal protein uL22 family. As to quaternary structure, part of the 50S ribosomal subunit.

It is found in the plastid. Its subcellular location is the organellar chromatophore. In terms of biological role, this protein binds specifically to 23S rRNA. Functionally, the globular domain of the protein is located near the polypeptide exit tunnel on the outside of the subunit, while an extended beta-hairpin is found that lines the wall of the exit tunnel in the center of the 70S ribosome. The sequence is that of Large ribosomal subunit protein uL22c (rpl22) from Paulinella chromatophora.